Reading from the N-terminus, the 474-residue chain is Probable CAAX prenyl protease 1 (474 aa).

The next 3 helical transmembrane spans lie at 103-123 (SWFS…IIKY), 196-216 (IFVI…SVVV), and 230-250 (FIMY…TIAP). Residue histidine 332 coordinates Zn(2+). Glutamate 333 is a catalytic residue. Residue histidine 336 participates in Zn(2+) binding. Transmembrane regions (helical) follow at residues 344-364 (INTI…AAFI) and 381-401 (VIVG…ILTF). Glutamate 411 contributes to the Zn(2+) binding site. Aspartate 415 (proton donor) is an active-site residue.

The protein belongs to the peptidase M48A family. Zn(2+) is required as a cofactor.

The protein resides in the endoplasmic reticulum membrane. It catalyses the reaction Hydrolyzes the peptide bond -P2-(S-farnesyl or geranylgeranyl)C-P1'-P2'-P3'-COOH where P1' and P2' are amino acids with aliphatic side chains and P3' is any C-terminal residue.. Proteolytically removes the C-terminal three residues of farnesylated proteins. The polypeptide is Probable CAAX prenyl protease 1 (Schizosaccharomyces pombe (strain 972 / ATCC 24843) (Fission yeast)).